The following is a 435-amino-acid chain: Antho-RFamide neuropeptides type 1 (435 aa).

The first 22 residues, 1-22 (MTTVSYVTILLTVLVQVLTSDA), serve as a signal peptide directing secretion. The propeptide occupies 23 to 193 (KATNNKRELS…SVPGRYGREL (171 aa)). Gln194 is subject to Pyrrolidone carboxylic acid. Residue Phe197 is modified to Phenylalanine amide. The propeptide occupies 199–201 (REL). Phe205 carries the phenylalanine amide modification. The propeptide occupies 207-209 (REA). Phe213 bears the Phenylalanine amide mark. Residues 215-217 (REL) constitute a propeptide that is removed on maturation. The residue at position 221 (Phe221) is a Phenylalanine amide. The propeptide occupies 223 to 225 (REF). At Phe229 the chain carries Phenylalanine amide. The segment covering 230-371 (GREDQGRFGR…EDIAEADQGR (142 aa)) has biased composition (basic and acidic residues). Disordered regions lie at residues 230 to 374 (GRED…RFGR) and 386 to 435 (AKKR…AKTS). The propeptide occupies 231 to 233 (RED). Position 237 is a phenylalanine amide (Phe237). Residues 239–241 (RED) constitute a propeptide that is removed on maturation. Phe245 is subject to Phenylalanine amide. A propeptide spanning residues 247–249 (RED) is cleaved from the precursor. Phe253 is subject to Phenylalanine amide. Residues 255–257 (RED) constitute a propeptide that is removed on maturation. Phe261 is modified (phenylalanine amide). Residues 263–265 (RED) constitute a propeptide that is removed on maturation. Phe269 is modified (phenylalanine amide). Residues 271–273 (RED) constitute a propeptide that is removed on maturation. Phe277 bears the Phenylalanine amide mark. A propeptide spanning residues 279–281 (REL) is cleaved from the precursor. Phe285 is modified (phenylalanine amide). A propeptide spanning residues 287–289 (REF) is cleaved from the precursor. Position 293 is a phenylalanine amide (Phe293). Residues 295 to 297 (RED) constitute a propeptide that is removed on maturation. Phe301 carries the post-translational modification Phenylalanine amide. Positions 303-305 (RED) are excised as a propeptide. Phe309 carries the phenylalanine amide modification. Residues 311-313 (REL) constitute a propeptide that is removed on maturation. Phe317 bears the Phenylalanine amide mark. Residues 319–321 (RED) constitute a propeptide that is removed on maturation. Phe325 carries the phenylalanine amide modification. The propeptide occupies 327 to 329 (RED). Phe333 bears the Phenylalanine amide mark. The propeptide occupies 335 to 342 (REDLAKED). Phe346 is subject to Phenylalanine amide. Positions 348 to 355 (REDLAKED) are excised as a propeptide. Phe359 is subject to Phenylalanine amide. Residues 361–368 (REDIAEAD) constitute a propeptide that is removed on maturation. The residue at position 372 (Phe372) is a Phenylalanine amide. Residues 374–435 (RNAAAAAAAA…KSDDALAKTS (62 aa)) constitute a propeptide that is removed on maturation. The span at 398 to 435 (SDPKPQTRFRDGKDMQEKRKVEKKDKIEKSDDALAKTS) shows a compositional bias: basic and acidic residues.

It belongs to the FARP (FMRFamide related peptide) family.

The protein resides in the secreted. Its function is as follows. Not known but it could act as a transmitter at neuromuscular synapses. This is Antho-RFamide neuropeptides type 1 from Anthopleura elegantissima (Green aggregating anemone).